The chain runs to 424 residues: UDP-N-acetylglucosamine 1-carboxyvinyltransferase (424 aa).

Position 22-23 (22-23) interacts with phosphoenolpyruvate; it reads KN. Arg93 is a binding site for UDP-N-acetyl-alpha-D-glucosamine. Residue Cys117 is the Proton donor of the active site. Residue Cys117 is modified to 2-(S-cysteinyl)pyruvic acid O-phosphothioketal. UDP-N-acetyl-alpha-D-glucosamine is bound by residues 162–165, Asp307, and Ile329; that span reads KVSV.

This sequence belongs to the EPSP synthase family. MurA subfamily.

It is found in the cytoplasm. The catalysed reaction is phosphoenolpyruvate + UDP-N-acetyl-alpha-D-glucosamine = UDP-N-acetyl-3-O-(1-carboxyvinyl)-alpha-D-glucosamine + phosphate. It participates in cell wall biogenesis; peptidoglycan biosynthesis. Functionally, cell wall formation. Adds enolpyruvyl to UDP-N-acetylglucosamine. This Actinobacillus pleuropneumoniae serotype 5b (strain L20) protein is UDP-N-acetylglucosamine 1-carboxyvinyltransferase.